We begin with the raw amino-acid sequence, 261 residues long: Lysoplasmalogenase (261 aa).

Transmembrane regions (helical) follow at residues 29–49 (GWVV…VIAL), 65–85 (PAFK…HPIG), 90–107 (WLVP…LLAI), 111–133 (TWAF…GALL), 146–166 (VAAV…FWPH), 172–192 (LTIP…TALL), 197–217 (TIWT…IGIG), and 227–247 (AVPI…GFFF).

Belongs to the TMEM86 family.

Its subcellular location is the cell membrane. It catalyses the reaction a 1-O-(1Z-alkenyl)-sn-glycero-3-phosphocholine + H2O = a 2,3-saturated aldehyde + sn-glycerol 3-phosphocholine. The enzyme catalyses a 1-O-(1Z-alkenyl)-sn-glycero-3-phosphoethanolamine + H2O = a 2,3-saturated aldehyde + sn-glycero-3-phosphoethanolamine. Specifically hydrolyzes the vinyl ether bond of lysoplasmenylcholine (pLPC) and lysoplasmenylethanolamine (pLPE) to release a fatty aldehyde and glycerophospho-choline or glycerophospho-ethanolamine. The polypeptide is Lysoplasmalogenase (Mycobacterium bovis (strain ATCC BAA-935 / AF2122/97)).